The chain runs to 307 residues: Transcription initiation factor IIB 5 (307 aa).

The TFIIB-type zinc-finger motif lies at 19 to 47 (TTEPCPECGGPVRTNSAETVCADCGLIID). The Zn(2+) site is built by cysteine 23, cysteine 26, cysteine 39, and cysteine 42. Composition is skewed to basic and acidic residues over residues 54-66 (GPEW…DTAK) and 107-121 (MRRE…STKE). The disordered stretch occupies residues 54–121 (GPEWHRDDAD…SRGRWRSTKE (68 aa)). 2 tandem repeats follow at residues 129-212 (TEIR…NEEL) and 223-304 (QFVP…RLLS).

This sequence belongs to the TFIIB family.

In terms of biological role, stabilizes TBP binding to an archaeal box-A promoter. Also responsible for recruiting RNA polymerase II to the pre-initiation complex (DNA-TBP-TFIIB). This chain is Transcription initiation factor IIB 5, found in Halobacterium salinarum (strain ATCC 700922 / JCM 11081 / NRC-1) (Halobacterium halobium).